The sequence spans 350 residues: Biotin synthase (350 aa).

The region spanning 41 to 268 is the Radical SAM core domain; the sequence is NEVQISRLLS…LSRVRLSAGR (228 aa). [4Fe-4S] cluster contacts are provided by Cys56, Cys60, and Cys63. [2Fe-2S] cluster is bound by residues Cys100, Cys131, Cys191, and Arg263.

It belongs to the radical SAM superfamily. Biotin synthase family. As to quaternary structure, homodimer. [4Fe-4S] cluster serves as cofactor. [2Fe-2S] cluster is required as a cofactor.

The catalysed reaction is (4R,5S)-dethiobiotin + (sulfur carrier)-SH + 2 reduced [2Fe-2S]-[ferredoxin] + 2 S-adenosyl-L-methionine = (sulfur carrier)-H + biotin + 2 5'-deoxyadenosine + 2 L-methionine + 2 oxidized [2Fe-2S]-[ferredoxin]. It functions in the pathway cofactor biosynthesis; biotin biosynthesis; biotin from 7,8-diaminononanoate: step 2/2. Functionally, catalyzes the conversion of dethiobiotin (DTB) to biotin by the insertion of a sulfur atom into dethiobiotin via a radical-based mechanism. The chain is Biotin synthase from Shewanella baltica (strain OS223).